The primary structure comprises 245 residues: Flavin-dependent thymidylate synthase (245 aa).

The ThyX domain maps to 5–210 (IRVKLVNYTK…ELRPIIKWAK (206 aa)). FAD contacts are provided by residues Ser-59, 83-85 (RHR), and Gln-91. Residues 80–83 (QLVR), 91–95 (QQSQR), and Arg-149 contribute to the dUMP site. Residues 83–93 (RHRLASYTQQS) carry the ThyX motif motif. FAD-binding positions include 165–167 (NLR) and His-171. Residue Arg-176 participates in dUMP binding. Catalysis depends on Arg-176, which acts as the Involved in ionization of N3 of dUMP, leading to its activation.

The protein belongs to the thymidylate synthase ThyX family. In terms of assembly, homotetramer. The cofactor is FAD.

It catalyses the reaction dUMP + (6R)-5,10-methylene-5,6,7,8-tetrahydrofolate + NADPH + H(+) = dTMP + (6S)-5,6,7,8-tetrahydrofolate + NADP(+). It participates in pyrimidine metabolism; dTTP biosynthesis. Catalyzes the reductive methylation of 2'-deoxyuridine-5'-monophosphate (dUMP) to 2'-deoxythymidine-5'-monophosphate (dTMP) while utilizing 5,10-methylenetetrahydrofolate (mTHF) as the methyl donor, and NADPH and FADH(2) as the reductant. This is Flavin-dependent thymidylate synthase from Thermococcus kodakarensis (strain ATCC BAA-918 / JCM 12380 / KOD1) (Pyrococcus kodakaraensis (strain KOD1)).